A 738-amino-acid chain; its full sequence is Vesicle-fusing ATPase (738 aa).

Residues 507–512 (NGIINY) and 547–554 (PGCGKSSL) each bind ATP.

Belongs to the AAA ATPase family. Interacts with syn7A, snpA and snpC. The cofactor is Mg(2+).

The protein localises to the cytoplasmic vesicle membrane. Its subcellular location is the endosome membrane. It carries out the reaction ATP + H2O = ADP + phosphate + H(+). Functionally, required for vesicle-mediated transport. Involved in endocytosis and endosome-endosome fusion. May be required for transport from the endoplasmic reticulum to the Golgi stack, and for the fusion of transport vesicles within the Golgi cisternae. Required for cell polarity, locomotion and chemotaxis. This chain is Vesicle-fusing ATPase (nsfA), found in Dictyostelium discoideum (Social amoeba).